The primary structure comprises 90 residues: Probable Fe(2+)-trafficking protein (90 aa).

This sequence belongs to the Fe(2+)-trafficking protein family.

Its function is as follows. Could be a mediator in iron transactions between iron acquisition and iron-requiring processes, such as synthesis and/or repair of Fe-S clusters in biosynthetic enzymes. In Idiomarina loihiensis (strain ATCC BAA-735 / DSM 15497 / L2-TR), this protein is Probable Fe(2+)-trafficking protein.